The sequence spans 66 residues: Large ribosomal subunit protein bL31 (66 aa).

Zn(2+)-binding residues include C16, C18, C36, and C39.

Belongs to the bacterial ribosomal protein bL31 family. Type A subfamily. Part of the 50S ribosomal subunit during exponential growth. Zn(2+) serves as cofactor.

Binds the 23S rRNA. Its function is as follows. While neither of the L31 paralogs is essential, this protein seems to function as the main L31 protein. Has a lower affinity for 70S ribosomes than the non-zinc-containing paralog L31B (ytiA); is displaced by it to varying extents, even under zinc-replete conditions. In Bacillus subtilis (strain 168), this protein is Large ribosomal subunit protein bL31 (rpmE).